The chain runs to 155 residues: DNA gyrase inhibitor (155 aa).

It belongs to the DNA gyrase inhibitor family. As to quaternary structure, interacts with DNA gyrase.

The protein resides in the cytoplasm. Inhibits the supercoiling activity of DNA gyrase. Acts by inhibiting DNA gyrase at an early step, prior to (or at the step of) binding of DNA by the gyrase. It protects cells against toxins that target DNA gyrase, by inhibiting activity of these toxins and reducing the formation of lethal double-strand breaks in the cell. In Edwardsiella ictaluri (strain 93-146), this protein is DNA gyrase inhibitor.